Here is a 314-residue protein sequence, read N- to C-terminus: tRNA pseudouridine synthase B (314 aa).

H43 contacts substrate. D48 functions as the Nucleophile in the catalytic mechanism. Positions 76, 179, and 200 each coordinate substrate.

This sequence belongs to the pseudouridine synthase TruB family. Type 1 subfamily.

It carries out the reaction uridine(55) in tRNA = pseudouridine(55) in tRNA. In terms of biological role, responsible for synthesis of pseudouridine from uracil-55 in the psi GC loop of transfer RNAs. The sequence is that of tRNA pseudouridine synthase B from Enterobacter sp. (strain 638).